Reading from the N-terminus, the 335-residue chain is Dihydroorotate dehydrogenase (quinone) (335 aa).

Residues 59–63 (AGLDK) and T83 contribute to the FMN site. K63 lines the substrate pocket. 108 to 112 (NRMGF) lines the substrate pocket. 2 residues coordinate FMN: N136 and N169. N169 serves as a coordination point for substrate. Residue S172 is the Nucleophile of the active site. N174 contacts substrate. Positions 214 and 242 each coordinate FMN. 243–244 (NT) lines the substrate pocket. Residues G265, G294, and 315-316 (YS) contribute to the FMN site.

The protein belongs to the dihydroorotate dehydrogenase family. Type 2 subfamily. Monomer. FMN serves as cofactor.

Its subcellular location is the cell membrane. The catalysed reaction is (S)-dihydroorotate + a quinone = orotate + a quinol. Its pathway is pyrimidine metabolism; UMP biosynthesis via de novo pathway; orotate from (S)-dihydroorotate (quinone route): step 1/1. In terms of biological role, catalyzes the conversion of dihydroorotate to orotate with quinone as electron acceptor. The chain is Dihydroorotate dehydrogenase (quinone) from Neisseria meningitidis serogroup B (strain ATCC BAA-335 / MC58).